The primary structure comprises 346 residues: Holliday junction branch migration complex subunit RuvB (346 aa).

The interval 1 to 182 (MKIELLTTPA…FGINSRFDYY (182 aa)) is large ATPase domain (RuvB-L). ATP contacts are provided by residues Ile-21, Arg-22, Gly-63, Lys-66, Thr-67, Thr-68, 129–131 (EDF), Arg-172, Tyr-182, and Arg-219. Thr-67 is a binding site for Mg(2+). A small ATPAse domain (RuvB-S) region spans residues 183 to 253 (SPDLLEGIVM…IAMKTLECLD (71 aa)). The segment at 256 to 346 (EEGLDDMDKK…GLFDADGNLS (91 aa)) is head domain (RuvB-H). Positions 311 and 316 each coordinate DNA.

It belongs to the RuvB family. As to quaternary structure, homohexamer. Forms an RuvA(8)-RuvB(12)-Holliday junction (HJ) complex. HJ DNA is sandwiched between 2 RuvA tetramers; dsDNA enters through RuvA and exits via RuvB. An RuvB hexamer assembles on each DNA strand where it exits the tetramer. Each RuvB hexamer is contacted by two RuvA subunits (via domain III) on 2 adjacent RuvB subunits; this complex drives branch migration. In the full resolvosome a probable DNA-RuvA(4)-RuvB(12)-RuvC(2) complex forms which resolves the HJ.

The protein localises to the cytoplasm. The enzyme catalyses ATP + H2O = ADP + phosphate + H(+). Functionally, the RuvA-RuvB-RuvC complex processes Holliday junction (HJ) DNA during genetic recombination and DNA repair, while the RuvA-RuvB complex plays an important role in the rescue of blocked DNA replication forks via replication fork reversal (RFR). RuvA specifically binds to HJ cruciform DNA, conferring on it an open structure. The RuvB hexamer acts as an ATP-dependent pump, pulling dsDNA into and through the RuvAB complex. RuvB forms 2 homohexamers on either side of HJ DNA bound by 1 or 2 RuvA tetramers; 4 subunits per hexamer contact DNA at a time. Coordinated motions by a converter formed by DNA-disengaged RuvB subunits stimulates ATP hydrolysis and nucleotide exchange. Immobilization of the converter enables RuvB to convert the ATP-contained energy into a lever motion, pulling 2 nucleotides of DNA out of the RuvA tetramer per ATP hydrolyzed, thus driving DNA branch migration. The RuvB motors rotate together with the DNA substrate, which together with the progressing nucleotide cycle form the mechanistic basis for DNA recombination by continuous HJ branch migration. Branch migration allows RuvC to scan DNA until it finds its consensus sequence, where it cleaves and resolves cruciform DNA. The protein is Holliday junction branch migration complex subunit RuvB of Chlorobium phaeovibrioides (strain DSM 265 / 1930) (Prosthecochloris vibrioformis (strain DSM 265)).